Reading from the N-terminus, the 659-residue chain is UvrABC system protein B (659 aa).

The region spanning 25-414 (EGVRRGAREQ…PSLVVEQIVR (390 aa)) is the Helicase ATP-binding domain. 38-45 (GATGTGKT) lines the ATP pocket. The Beta-hairpin signature appears at 91 to 114 (YYDYYQPEAYIPTTDTYIEKDALI). Residues 431-597 (QIDDLYAEIR…TIVKPVRDVI (167 aa)) form the Helicase C-terminal domain. Residues 620 to 655 (PKVVAKLRKEMMQAAKDLDFERAAEIRDIIFELEKK) enclose the UVR domain.

This sequence belongs to the UvrB family. Forms a heterotetramer with UvrA during the search for lesions. Interacts with UvrC in an incision complex.

The protein resides in the cytoplasm. Functionally, the UvrABC repair system catalyzes the recognition and processing of DNA lesions. A damage recognition complex composed of 2 UvrA and 2 UvrB subunits scans DNA for abnormalities. Upon binding of the UvrA(2)B(2) complex to a putative damaged site, the DNA wraps around one UvrB monomer. DNA wrap is dependent on ATP binding by UvrB and probably causes local melting of the DNA helix, facilitating insertion of UvrB beta-hairpin between the DNA strands. Then UvrB probes one DNA strand for the presence of a lesion. If a lesion is found the UvrA subunits dissociate and the UvrB-DNA preincision complex is formed. This complex is subsequently bound by UvrC and the second UvrB is released. If no lesion is found, the DNA wraps around the other UvrB subunit that will check the other stand for damage. The polypeptide is UvrABC system protein B (Symbiobacterium thermophilum (strain DSM 24528 / JCM 14929 / IAM 14863 / T)).